Here is a 410-residue protein sequence, read N- to C-terminus: Translation initiation factor 2 subunit gamma (410 aa).

One can recognise a tr-type G domain in the interval 6–203 (QSEVNIGMVG…AIQEFIPTPE (198 aa)). Residues 15-22 (GHVDHGKT) are G1. Mg(2+) is bound by residues D18, T22, G43, and S45. 18–23 (DHGKTS) lines the GTP pocket. A G2 region spans residues 43–47 (GISIR). Zn(2+) contacts are provided by C58, C61, C73, and C76. The interval 90–93 (DAPG) is G3. GTP is bound by residues 146–149 (NKID) and 181–183 (SAH). The interval 146–149 (NKID) is G4. The interval 181 to 183 (SAH) is G5.

Belongs to the TRAFAC class translation factor GTPase superfamily. Classic translation factor GTPase family. EIF2G subfamily. As to quaternary structure, heterotrimer composed of an alpha, a beta and a gamma chain. Requires Mg(2+) as cofactor.

The catalysed reaction is GTP + H2O = GDP + phosphate + H(+). Functionally, eIF-2 functions in the early steps of protein synthesis by forming a ternary complex with GTP and initiator tRNA. The protein is Translation initiation factor 2 subunit gamma of Methanococcus maripaludis (strain C7 / ATCC BAA-1331).